A 285-amino-acid polypeptide reads, in one-letter code: UstYa family oxidase phomYe (285 aa).

Residues 32-54 (LFYGWKGIAFLSTLTNVLFISGF) traverse the membrane as a helical segment. A disordered region spans residues 143–165 (YGFGTPLTGPGSEGNEHDPTPWT). Residues 177–181 (HQLHC) carry the HXXHC 1 motif. N-linked (GlcNAc...) asparagine glycosylation is present at N202. An HXXHC 2 motif is present at residues 209 to 213 (HVDHC).

Belongs to the ustYa family.

It localises to the membrane. Its pathway is mycotoxin biosynthesis. Functionally, ustYa family oxidase; part of the gene cluster that mediates the biosynthesis of the phomopsins, a group of hexapeptide mycotoxins which infects lupins and causes lupinosis disease in livestock. Within the pathway, phomYe catalyzes the desaturation of the Pro moiety into 3,4-dehydroproline (dPro). The pathway starts with the processing of the precursor phomA by several endopeptidases including kexin proteases as well as the cluster-specific S41 family peptidase phomP1 and the oligopeptidase phomG to produce 10 identical copies of the hexapeptide Tyr-Val-Ile-Pro-Ile-Asp. After being excised from the precursor peptide, the core peptides are cyclized and modified post-translationally by enzymes encoded within the gene cluster. The timing and order of proteolysis of the phomA precursor and PTMs are still unknown. Two tyrosinase-like enzymes, phomQ1 and phomQ2, catalyze the chlorination and hydroxylation of Tyr, respectively. PhomYb, is proposed to be involved in the construction of the macrocyclic structure. The other 4 ustYa family proteins may be involved in PTMs that generate the unique structure of phomopsin A. PhomYa is required for the hydroxylation of C-beta of Tyr. PhomYc, phomYd, and phomYe are responsible for the biosynthesis of 2,3-dehydroisoleucine (dIle), 2,3-dehydroaspartic acid (dAsp), and 3,4-dehydroproline (dPro), respectively. While dIle formation by phomYc is indispensable for the installation of dAsp by phomYd, the order of the other PTMs have not been elucidated yet. Most of the biosynthetic enzymes likely have broad substrate specificity, and thus, there might be a metabolic grid from a precursor to phomopsin A. The enzyme(s) responsible for the biosynthesis of 3,4-dehydrovaline (dVal) have also not been identified yet. Finally, phomM acts as an S-adenosylmethionine-dependent alpha-N-methyltransferase that catalyzes two successive N-methylation reactions, converting N-desmethyl-phomopsin A to phomopsin A and phomopsin A further to an N,N-dimethylated congener called phomopsin E. This chain is UstYa family oxidase phomYe, found in Diaporthe leptostromiformis (Lupinosis disease fungus).